We begin with the raw amino-acid sequence, 278 residues long: Urease accessory protein UreD (278 aa).

It belongs to the UreD family. In terms of assembly, ureD, UreF and UreG form a complex that acts as a GTP-hydrolysis-dependent molecular chaperone, activating the urease apoprotein by helping to assemble the nickel containing metallocenter of UreC. The UreE protein probably delivers the nickel.

The protein localises to the cytoplasm. In terms of biological role, required for maturation of urease via the functional incorporation of the urease nickel metallocenter. The chain is Urease accessory protein UreD from Blochmanniella pennsylvanica (strain BPEN).